We begin with the raw amino-acid sequence, 354 residues long: Probable L-ascorbate-6-phosphate lactonase UlaG (354 aa).

This sequence belongs to the UlaG family. It depends on a divalent metal cation as a cofactor.

Its subcellular location is the cytoplasm. The enzyme catalyses L-ascorbate 6-phosphate + H2O = 3-dehydro-L-gulonate 6-phosphate. The protein operates within cofactor degradation; L-ascorbate degradation; D-xylulose 5-phosphate from L-ascorbate: step 1/4. Probably catalyzes the hydrolysis of L-ascorbate-6-P into 3-keto-L-gulonate-6-P. Is essential for L-ascorbate utilization under anaerobic conditions. In Salmonella heidelberg (strain SL476), this protein is Probable L-ascorbate-6-phosphate lactonase UlaG.